The primary structure comprises 621 residues: Transmembrane protein 200C (621 aa).

The segment at 12–37 (ARKQDPLRPPSQIPKRKRKAKKRRKN) is disordered. Positions 25–36 (PKRKRKAKKRRK) are enriched in basic residues. The helical transmembrane segment at 53 to 73 (GLIALCGILVLLVGIAMAVVG) threads the bilayer. Positions 80-147 (GTNREGGKQL…RAASPSSSST (68 aa)) are disordered. The span at 125 to 147 (SSSAGAPRSTPPARAASPSSSST) shows a compositional bias: low complexity. Residues 167 to 187 (VFGPLIMGIGIFLFICANAVL) form a helical membrane-spanning segment. Disordered regions lie at residues 284 to 315 (WPPH…PREP), 347 to 368 (ASSC…QSTA), and 384 to 598 (LQGG…FTNK). The segment covering 290–303 (APSGGRPRGAASPP) has biased composition (low complexity). Basic and acidic residues predominate over residues 405 to 418 (PGERGSQEIPRGEL). The segment covering 479–490 (RAPPSPEPPPSP) has biased composition (pro residues). Composition is skewed to low complexity over residues 491 to 505 (GSAD…KAAS) and 523 to 533 (GSSQSDDPSSS). Positions 586-595 (EQPQPVQRQF) are enriched in polar residues.

It belongs to the TMEM200 family.

It localises to the membrane. The chain is Transmembrane protein 200C (TMEM200C) from Homo sapiens (Human).